The chain runs to 151 residues: MVDAARASKLADRIQRIVAEMLERRIKDPRLGFVTVTDARLTNDLRDATVYYTVFGSDAEKAATAAALESAKGLIRSEVGRRTGLRHTPTITFVIDEVPDNARHIEELLAKAKQADAEVARAAANARPAGDPDPYREPRPADDDDEDDEDE.

The disordered stretch occupies residues 116-151 (DAEVARAAANARPAGDPDPYREPRPADDDDEDDEDE). The span at 120 to 129 (ARAAANARPA) shows a compositional bias: low complexity. The segment covering 142-151 (DDDDEDDEDE) has biased composition (acidic residues).

It belongs to the RbfA family. Monomer. Binds 30S ribosomal subunits, but not 50S ribosomal subunits or 70S ribosomes.

The protein resides in the cytoplasm. Functionally, one of several proteins that assist in the late maturation steps of the functional core of the 30S ribosomal subunit. Associates with free 30S ribosomal subunits (but not with 30S subunits that are part of 70S ribosomes or polysomes). Required for efficient processing of 16S rRNA. May interact with the 5'-terminal helix region of 16S rRNA. The protein is Ribosome-binding factor A of Thermobifida fusca (strain YX).